The chain runs to 473 residues: Reticulon-4 receptor (473 aa).

The N-terminal stretch at 1-26 (MKRASSGGSRLLAWVLWLQAWRVATP) is a signal peptide. Cystine bridges form between Cys27–Cys33 and Cys31–Cys43. Positions 27-57 (CPGACVCYNEPKVTTSCPQQGLQAVPTGIPA) constitute an LRRNT domain. LRR repeat units lie at residues 58–79 (SSQR…SFQS), 82–103 (NLTI…AFTG), 106–128 (LLEQ…TFHG), 131–152 (HLHT…LFRG), 155–176 (ALQY…TFRD), 179–200 (NLTH…AFRG), 203–224 (SLDR…AFRD), and 227–248 (RLMT…VLMP). Asn82 carries N-linked (GlcNAc...) asparagine glycosylation. N-linked (GlcNAc...) asparagine glycosylation is present at Asn179. Positions 260 to 311 (NPWVCDCRARPLWAWLQKFRGSSSEVPCNLPQRLADRDLKRLAASDLEGCAV) constitute an LRRCT domain. Intrachain disulfides connect Cys264-Cys287, Cys266-Cys335, and Cys309-Cys336. Positions 346–446 (VLEPGRPASA…GASGTGDAEG (101 aa)) are disordered. An N-linked (GlcNAc...) asparagine glycan is attached at Asn372. Residues 413 to 429 (PRRRPGCSRKNRTRSHC) are compositionally biased toward basic residues. Residues 434-445 (AGSGASGTGDAE) are compositionally biased toward gly residues. Ser447 carries the GPI-anchor amidated serine lipid modification. The propeptide at 448–473 (GALPALACSLAPLGLALVLWTVLGPC) is removed in mature form.

It belongs to the Nogo receptor family. Homodimer. Interacts with MAG. Interacts with RTN4. Interacts with NGFR. Interacts with LINGO1. Interacts with KIAA0319L. Interacts with OLFM1; this inhibits interaction with LINGO1 and NGFR. Interacts with OMG. N-glycosylated. O-glycosylated. Contains terminal sialic acid groups on its glycan chains. As to expression, detected in embryonic hippocampus neurons. Detected in brain (at protein level). Detected in neurons in the neocortex, in hippocampus, dorsal thalamus, cerebellum granule cell layer and the mitral cell layer in the olfactory bulb. Detected in brain, dorsal root ganglion and heart.

It is found in the cell membrane. The protein localises to the membrane raft. The protein resides in the cell projection. Its subcellular location is the dendrite. It localises to the axon. It is found in the perikaryon. Receptor for RTN4, OMG and MAG. Functions as a receptor for the sialylated gangliosides GT1b and GM1. Besides, functions as a receptor for chondroitin sulfate proteoglycans. Can also bind heparin. Intracellular signaling cascades are triggered via the coreceptor NGFR. Signaling mediates activation of Rho and downstream reorganization of the actin cytoskeleton. Mediates axonal growth inhibition. Mediates axonal growth inhibition and plays a role in regulating axon regeneration and neuronal plasticity in the adult central nervous system. Plays a role in postnatal brain development. Required for normal axon migration across the brain midline and normal formation of the corpus callosum. Protects motoneurons against apoptosis; protection against apoptosis is probably mediated via interaction with MAG. Acts in conjunction with RTN4 and LINGO1 in regulating neuronal precursor cell motility during cortical development. Like other family members, plays a role in restricting the number dendritic spines and the number of synapses that are formed during brain development. This chain is Reticulon-4 receptor (Rtn4r), found in Mus musculus (Mouse).